We begin with the raw amino-acid sequence, 894 residues long: Pentatricopeptide repeat-containing protein At1g19720 (894 aa).

PPR repeat units lie at residues 80–110, 114–144, 145–179, 180–214, 215–245, 246–280, 281–315, 316–350, 351–385, 386–416, 417–451, 452–486, 488–522, 523–557, 558–588, 589–623, 624–659, and 660–694; these read KRST…FGLF, DVFV…MRER, NLFT…GVLP, DDFL…GMSS, CLRV…MRER, DVIA…GISP, GLVT…GITA, DVFT…GVVP, NAVT…GFID, DVLV…VKNK, DVYT…NLRP, NIIT…GKVQ, NTAT…RFMP, NSVT…NLDA, IHAV…METK, DIIT…GITP, NRGT…HIIP, and ALEH…SETP. The interval 695 to 770 is type E motif; sequence IWESFLTGCR…PLGQSWIEVR (76 aa). The type E(+) motif stretch occupies residues 771–801; sequence NLIHTFTTGDQSKLCTDVLYPLVEKMSRLDN. Residues 803 to 894 form a type DYW motif region; sequence SDQYNGELWI…NGDCSCKDYW (92 aa).

It belongs to the PPR family. PCMP-H subfamily.

This is Pentatricopeptide repeat-containing protein At1g19720 (DYW7) from Arabidopsis thaliana (Mouse-ear cress).